Reading from the N-terminus, the 236-residue chain is 2,3,4,5-tetrahydropyridine-2,6-dicarboxylate N-acetyltransferase (236 aa).

It belongs to the transferase hexapeptide repeat family. DapH subfamily.

It carries out the reaction (S)-2,3,4,5-tetrahydrodipicolinate + acetyl-CoA + H2O = L-2-acetamido-6-oxoheptanedioate + CoA. It participates in amino-acid biosynthesis; L-lysine biosynthesis via DAP pathway; LL-2,6-diaminopimelate from (S)-tetrahydrodipicolinate (acetylase route): step 1/3. In terms of biological role, catalyzes the transfer of an acetyl group from acetyl-CoA to tetrahydrodipicolinate. This is 2,3,4,5-tetrahydropyridine-2,6-dicarboxylate N-acetyltransferase from Clostridium perfringens (strain ATCC 13124 / DSM 756 / JCM 1290 / NCIMB 6125 / NCTC 8237 / Type A).